The chain runs to 116 residues: Ribosome-binding factor A (116 aa).

This sequence belongs to the RbfA family. Monomer. Binds 30S ribosomal subunits, but not 50S ribosomal subunits or 70S ribosomes.

The protein resides in the cytoplasm. In terms of biological role, one of several proteins that assist in the late maturation steps of the functional core of the 30S ribosomal subunit. Associates with free 30S ribosomal subunits (but not with 30S subunits that are part of 70S ribosomes or polysomes). Required for efficient processing of 16S rRNA. May interact with the 5'-terminal helix region of 16S rRNA. This is Ribosome-binding factor A from Chlorobium phaeobacteroides (strain DSM 266 / SMG 266 / 2430).